The following is an 856-amino-acid chain: Rod cGMP-specific 3',5'-cyclic phosphodiesterase subunit beta (856 aa).

Position 2 is an N-acetylserine (serine 2). 2 GAF domains span residues 71–220 (NMER…TLNL) and 252–429 (DIER…GWSV). A PDEase domain is found at 481 to 814 (EEDELGKILK…KEWKALADEY (334 aa)). Histidine 557 (proton donor) is an active-site residue. Histidine 561, histidine 597, aspartate 598, and aspartate 718 together coordinate a divalent metal cation. Cysteine 853 carries the S-geranylgeranyl cysteine lipid modification. The propeptide at 854–856 (CIL) is removed in mature form.

This sequence belongs to the cyclic nucleotide phosphodiesterase family. In terms of assembly, oligomer composed of two catalytic chains (alpha and beta), an inhibitory chain (gamma) and the delta chain. The cofactor is a divalent metal cation.

The protein resides in the membrane. Its subcellular location is the cell projection. It localises to the cilium. It is found in the photoreceptor outer segment. It carries out the reaction 3',5'-cyclic GMP + H2O = GMP + H(+). Its function is as follows. Rod-specific cGMP phosphodiesterase that catalyzes the hydrolysis of 3',5'-cyclic GMP. Necessary for the formation of a functional phosphodiesterase holoenzyme. Involved in retinal circadian rhythm photoentrainment via modulation of UVA and orange light-induced phase-shift of the retina clock. May participate in processes of transmission and amplification of the visual signal. The protein is Rod cGMP-specific 3',5'-cyclic phosphodiesterase subunit beta of Mus musculus (Mouse).